A 552-amino-acid chain; its full sequence is MRKNGFVVMGHLLKLVTPLAHIMAFTITMGTLGFLAAIFIMVLGATGLVNLLNFDTHLSFSGILTALIVLAVARGALRYLEQMSGHYIAFKLLALLRDKVFSSLRRLAFVKLQDKQAGQLVSLVTNDIELLEVFYAHTIAPIMIAFFTSAILLLVFAQLSSWFVLVALAAYLTVGVILPIITTKLAREDGRRYRELVGEMNDFFLDSVRGMKEIQLFGYAKQRLDEIQQRSQKIDTAFERIKDQEAKVRVYTEVAVSVFNIIMLFTGLILFSLDKIDFAAFLIGVILLMSSYGPVIALSNLSSNLLQTLASGERVLSLLAEEPELKDVESAVDLKDVSRIDVENVNFAYGEEQILSDVSLSVKKGEILGIHGRSGSGKSTLLKLLMRFYDPKSGSIKINGETLPNINTCSLRDNMAYITQQTYIFNETIEENIRLARRDATLEEIMEAAKKASIHDFILSLPQGYQTKMTELGGNLSDGEKQRIGIARAFLHNAPIILLDEPTSNLDSLNEAMILKSLLNVKAEKLIILVSHRQSTMAICDQVIGIENGRMS.

A run of 6 helical transmembrane segments spans residues 22-42, 52-72, 139-159, 162-182, 253-273, and 278-298; these read IMAF…FIMV, LNFD…VLAV, IAPI…FAQL, WFVL…PIIT, EVAV…LFSL, and FAAF…VIAL. Residues 23–307 enclose the ABC transmembrane type-1 domain; sequence MAFTITMGTL…LSNLSSNLLQ (285 aa). The 213-residue stretch at 340–552 folds into the ABC transporter domain; the sequence is IDVENVNFAY…VIGIENGRMS (213 aa). 372–379 serves as a coordination point for ATP; that stretch reads GRSGSGKS.

This sequence belongs to the ABC transporter superfamily. Lipid exporter (TC 3.A.1.106) family.

Its subcellular location is the cell inner membrane. This is Probable ABC transporter ATP-binding/permease protein HI_0664 from Haemophilus influenzae (strain ATCC 51907 / DSM 11121 / KW20 / Rd).